A 167-amino-acid chain; its full sequence is C-X-C motif chemokine 15 (167 aa).

The first 25 residues, 1-25 (MAAQGWSMLLLAVLNLGIFVRPCDT), serve as a signal peptide directing secretion. Intrachain disulfides connect C30–C57 and C32–C73. S157 carries the post-translational modification Phosphoserine.

Belongs to the intercrine alpha (chemokine CxC) family. In terms of tissue distribution, expression restricted to the lung, produced by bronchoepithelial cells and is released into the airways. Expressed at low levels in fetal lung.

It is found in the secreted. Its function is as follows. Chemotactic for neutrophils. Involved in lung-specific neutrophil trafficking during normal and inflammatory conditions. This chain is C-X-C motif chemokine 15 (Cxcl15), found in Mus musculus (Mouse).